The primary structure comprises 95 residues: Acylphosphatase (95 aa).

An Acylphosphatase-like domain is found at 7-93 (TWQLFAHGRV…QLFDRFDWLP (87 aa)). Catalysis depends on residues R22 and N40.

It belongs to the acylphosphatase family.

The enzyme catalyses an acyl phosphate + H2O = a carboxylate + phosphate + H(+). This chain is Acylphosphatase (acyP), found in Cupriavidus metallidurans (strain ATCC 43123 / DSM 2839 / NBRC 102507 / CH34) (Ralstonia metallidurans).